Consider the following 103-residue polypeptide: N(4)-acetylcytidine amidohydrolase (103 aa).

In terms of domain architecture, ASCH spans 6 to 94 (ITFFQRFQND…IAEIYPNQTQ (89 aa)). Lysine 21 functions as the Proton acceptor in the catalytic mechanism. The active-site Nucleophile is the threonine 24. The active-site Proton donor is the glutamate 74.

Belongs to the N(4)-acetylcytidine amidohydrolase family.

The enzyme catalyses N(4)-acetylcytidine + H2O = cytidine + acetate + H(+). The catalysed reaction is N(4)-acetyl-2'-deoxycytidine + H2O = 2'-deoxycytidine + acetate + H(+). It carries out the reaction N(4)-acetylcytosine + H2O = cytosine + acetate + H(+). Catalyzes the hydrolysis of N(4)-acetylcytidine (ac4C). The polypeptide is N(4)-acetylcytidine amidohydrolase (yqfB) (Salmonella heidelberg (strain SL476)).